The chain runs to 351 residues: D-threonate 4-phosphate dehydrogenase (351 aa).

Substrate is bound by residues His-147 and Thr-148. Residues His-177, His-221, and His-276 each contribute to the a divalent metal cation site. 3 residues coordinate substrate: Lys-284, Asn-293, and Arg-302.

The protein belongs to the PdxA family. PdxA2 subfamily. In terms of assembly, homodimer. The cofactor is a divalent metal cation.

The catalysed reaction is 4-O-phospho-D-threonate + NAD(+) = dihydroxyacetone phosphate + CO2 + NADH. Its function is as follows. Catalyzes the NAD-dependent oxidation and subsequent decarboxylation of D-threonate 4-phosphate to produce dihydroxyacetone phosphate (DHAP). Can also use 4-hydroxy-L-threonine 4-phosphate as substrate. In Bordetella bronchiseptica (strain ATCC BAA-588 / NCTC 13252 / RB50) (Alcaligenes bronchisepticus), this protein is D-threonate 4-phosphate dehydrogenase.